A 109-amino-acid polypeptide reads, in one-letter code: Large ribosomal subunit protein uL18c (109 aa).

The protein belongs to the universal ribosomal protein uL18 family. As to quaternary structure, part of the 50S ribosomal subunit; contacts the 5S rRNA.

It is found in the plastid. The protein localises to the chloroplast. Binds 5S rRNA, forms part of the central protuberance of the 50S subunit. The chain is Large ribosomal subunit protein uL18c (rpl18) from Cyanidioschyzon merolae (strain NIES-3377 / 10D) (Unicellular red alga).